A 95-amino-acid polypeptide reads, in one-letter code: Aspartyl/glutamyl-tRNA(Asn/Gln) amidotransferase subunit C (95 aa).

Belongs to the GatC family. As to quaternary structure, heterotrimer of A, B and C subunits.

It catalyses the reaction L-glutamyl-tRNA(Gln) + L-glutamine + ATP + H2O = L-glutaminyl-tRNA(Gln) + L-glutamate + ADP + phosphate + H(+). It carries out the reaction L-aspartyl-tRNA(Asn) + L-glutamine + ATP + H2O = L-asparaginyl-tRNA(Asn) + L-glutamate + ADP + phosphate + 2 H(+). In terms of biological role, allows the formation of correctly charged Asn-tRNA(Asn) or Gln-tRNA(Gln) through the transamidation of misacylated Asp-tRNA(Asn) or Glu-tRNA(Gln) in organisms which lack either or both of asparaginyl-tRNA or glutaminyl-tRNA synthetases. The reaction takes place in the presence of glutamine and ATP through an activated phospho-Asp-tRNA(Asn) or phospho-Glu-tRNA(Gln). This Chlorobium chlorochromatii (strain CaD3) protein is Aspartyl/glutamyl-tRNA(Asn/Gln) amidotransferase subunit C.